Consider the following 125-residue polypeptide: Large ribosomal subunit protein bL12 (125 aa).

The protein belongs to the bacterial ribosomal protein bL12 family. In terms of assembly, homodimer. Part of the ribosomal stalk of the 50S ribosomal subunit. Forms a multimeric L10(L12)X complex, where L10 forms an elongated spine to which 2 to 4 L12 dimers bind in a sequential fashion. Binds GTP-bound translation factors.

Forms part of the ribosomal stalk which helps the ribosome interact with GTP-bound translation factors. Is thus essential for accurate translation. This is Large ribosomal subunit protein bL12 from Sphingopyxis alaskensis (strain DSM 13593 / LMG 18877 / RB2256) (Sphingomonas alaskensis).